Reading from the N-terminus, the 172-residue chain is Dehydratase cfoI (172 aa).

Residues His-86 and His-111 contribute to the active site.

The protein belongs to the scytalone dehydratase family. Homotrimer. Each subunit contains an active site, located in the central part of the hydrophobic core of the monomer, which functions independently.

It functions in the pathway secondary metabolite biosynthesis; flavonoid biosynthesis. Functionally, cytochrome P450 monooxygenase; part of the gene cluster that mediates the biosynthesis of chlorflavonin, a fungal flavonoid with acetolactate synthase inhibitory activity. Within the pathway, cfoI is responsible for the hydroxylation of the flavonoid skeleton at position C3 with cfoF. The pathway begins with the PKS-NRPS hybrid synthetase cfoA that uses benzoic acid or p-hydroxybenzoic acid as a starter unit with four rounds of chain elongation using malonyl-CoA to form the chalcone skeleton. Then, a new type of chalcone isomerase, cfoK, catalyzes the conversion of the chalcone into a flavanone by a histidine-mediated oxa-Michael addition mechanism. The desaturation of flavanone to flavone is catalyzed by a new type of flavone synthase, the flavin mononucleotide (FMN)-dependent oxidoreductase cfoJ. Monooxygenases cfoF, cfoG, and P450 cfoH are responsible for the hydroxylation of the flavonoid skeleton at sites C3, C8, and C2', respectively. Like cfoF, the dehydratase cfoI plays also a role in the hydroxylation of position C3. Methyltransferases cfoB, cfoC, and cfoD then catalyze the methylation of C7-OH, C8-OH, and C3-OH, respectively. Finally, the monooxygenase cfoE is responsible for the chlorination of flavonoid at position C3'. The protein is Dehydratase cfoI of Aspergillus candidus.